Consider the following 382-residue polypeptide: MDNLFTFLHEIEDRYARTIFNFHLISCDEIGDIYGLMKERISSEDMFDNIVYNKDIHPAIKKLVYCDIQLTKHIINQNTYPVFNDSSQVKCCHYFDINSDNSNISSRTVEIFEREKSSLVSYIKTTNKKRKVNYGEIKKTVHGGTNANYFSGKKSDEYLSTTVRSNINQPWIKTISKRMRVDIINHSIVTRGKSSILQTIEIIFTNRTCVKIFKDSTMHIILSKDKDEKGCIHMIDKLFYVYYNLFLLFEDIIQNEYFKEVANVVNHVLTATALDEKLFLIKKMAEHDVYGVSNFKIGMFNLTFIKSLDHTVFPSLLDEDSKIKFFKGKKLNIVALRSLEDCINYVTKSENMIEMMKERSTILNSIDIETESVDRLKELLLK.

It belongs to the orthopoxvirus OPG150 family. In terms of assembly, heterodimerizes with protein A8 to form the virus intermediate transcription factor (VITF)-3.

Its function is as follows. Acts with RNA polymerase to initiate transcription from intermediate gene promoters. The chain is Intermediate transcription factor 3 large subunit (OPG150) from Bos taurus (Bovine).